We begin with the raw amino-acid sequence, 505 residues long: Gap junction alpha-10 protein (505 aa).

At 1–16 the chain is on the cytoplasmic side; sequence MGDWNLLGGILEEVHS. The helical transmembrane segment at 17–37 threads the bilayer; sequence HSTIVGKIWLTILFIFRMLVL. At 38–76 the chain is on the extracellular side; sequence GVAAEDVWDDEQSAFACNTQQPGCNNICYDDAFPISLIR. The chain crosses the membrane as a helical span at residues 77 to 97; it reads FWVLQIIFVSSPSLVYMGHAL. At 98–165 the chain is on the cytoplasmic side; the sequence is YRLRDFEKQR…TYVLHILTRS (68 aa). Residues 166-186 form a helical membrane-spanning segment; the sequence is VLEVGFMIGQYILYGFQMHPI. At 187 to 209 the chain is on the extracellular side; that stretch reads YKCTQAPCPNSVDCFVSRPTEKT. Residues 210-230 traverse the membrane as a helical segment; it reads IFMLFMHSIAAISLLLNILEI. Over 231 to 505 the chain is Cytoplasmic; it reads FHLGIRKIMR…IIHETYVYVY (275 aa). A compositionally biased stretch (polar residues) spans 371-383; the sequence is TMTASQHRPSSAL. Positions 371 to 491 are disordered; that stretch reads TMTASQHRPS…SKSSHVDSPP (121 aa). Positions 437 to 446 are enriched in basic and acidic residues; the sequence is MSEKGQRHSD. The segment covering 447–460 has biased composition (low complexity); that stretch reads SGSSRSLNSSCLDF.

The protein belongs to the connexin family. Alpha-type (group II) subfamily. As to quaternary structure, a connexon is composed of a hexamer of connexins. In terms of tissue distribution, low levels were detected in skin, heart, kidney, testis, ovary, intestine. Expression not detected in brain, sciatic nerve or liver. According to PubMed:15147297 expression is detected only in horizontal cells in the inner nuclear layer of the retina and not in other neurons of the central nervous system or tissues. Detected in the outer plexiform layer of the retina (at protein level).

Its subcellular location is the cell membrane. It is found in the cell junction. It localises to the gap junction. In terms of biological role, one gap junction consists of a cluster of closely packed pairs of transmembrane channels, the connexons, through which materials of low MW diffuse from one cell to a neighboring cell. Involved in tracer coupling between horizontal cells of the retina. May play a role in the regulation of horizontal cell patterning. The polypeptide is Gap junction alpha-10 protein (Gja10) (Mus musculus (Mouse)).